A 161-amino-acid polypeptide reads, in one-letter code: Regulator of ribonuclease activity A (161 aa).

Belongs to the RraA family. In terms of assembly, homotrimer. Binds to both RNA-binding sites in the C-terminal region of Rne and to RhlB.

The protein resides in the cytoplasm. In terms of biological role, globally modulates RNA abundance by binding to RNase E (Rne) and regulating its endonucleolytic activity. Can modulate Rne action in a substrate-dependent manner by altering the composition of the degradosome. Modulates RNA-binding and helicase activities of the degradosome. The chain is Regulator of ribonuclease activity A from Salmonella choleraesuis (strain SC-B67).